We begin with the raw amino-acid sequence, 212 residues long: Large ribosomal subunit protein uL3 (212 aa).

Residues 136–155 (THGNSVSHRVLGSTGQNQTP) form a disordered region. Position 153 is an N5-methylglutamine (Q153).

This sequence belongs to the universal ribosomal protein uL3 family. Part of the 50S ribosomal subunit. Forms a cluster with proteins L14 and L19. Methylated by PrmB.

One of the primary rRNA binding proteins, it binds directly near the 3'-end of the 23S rRNA, where it nucleates assembly of the 50S subunit. The chain is Large ribosomal subunit protein uL3 from Acinetobacter baumannii (strain AB307-0294).